The following is a 238-amino-acid chain: uncharacterized protein (238 aa).

The first 20 residues, 1-20 (MNNVKLLIAGSAFFAMSAQA), serve as a signal peptide directing secretion.

To E.coli GltF.

This is an uncharacterized protein from Escherichia coli (strain K12).